The chain runs to 85 residues: Translation initiation factor IF-1 2 (85 aa).

The S1-like domain occupies 1–72; that stretch reads MAKEELIEMQ…TKGRITFRHL (72 aa).

The protein belongs to the IF-1 family. As to quaternary structure, component of the 30S ribosomal translation pre-initiation complex which assembles on the 30S ribosome in the order IF-2 and IF-3, IF-1 and N-formylmethionyl-tRNA(fMet); mRNA recruitment can occur at any time during PIC assembly.

Its subcellular location is the cytoplasm. Functionally, one of the essential components for the initiation of protein synthesis. Stabilizes the binding of IF-2 and IF-3 on the 30S subunit to which N-formylmethionyl-tRNA(fMet) subsequently binds. Helps modulate mRNA selection, yielding the 30S pre-initiation complex (PIC). Upon addition of the 50S ribosomal subunit IF-1, IF-2 and IF-3 are released leaving the mature 70S translation initiation complex. This Paracidovorax citrulli (strain AAC00-1) (Acidovorax citrulli) protein is Translation initiation factor IF-1 2.